Here is a 72-residue protein sequence, read N- to C-terminus: DNA-directed RNA polymerase subunit omega (72 aa).

Belongs to the RNA polymerase subunit omega family. In terms of assembly, the RNAP catalytic core consists of 2 alpha, 1 beta, 1 beta' and 1 omega subunit. When a sigma factor is associated with the core the holoenzyme is formed, which can initiate transcription.

It carries out the reaction RNA(n) + a ribonucleoside 5'-triphosphate = RNA(n+1) + diphosphate. In terms of biological role, promotes RNA polymerase assembly. Latches the N- and C-terminal regions of the beta' subunit thereby facilitating its interaction with the beta and alpha subunits. The protein is DNA-directed RNA polymerase subunit omega of Laribacter hongkongensis (strain HLHK9).